The sequence spans 284 residues: MELFHHIKSVRDALGKARAAGKTVGFVPTMGNLHNAHLALVQQAKQHCDVVIVSIFVNRLQFGLNEDWDKYPRTLQDDAAKLREIGCDYLFCPEEGEVYPNGMDAQTRVIVPSMANVLCGASRPGHFEGVTTVVTKLFNIVQPDIAVFGIKDYQQLAIIRRMVEDLCIPVEIMAGDIVREADGLAMSSRNGFITAQERPRANQLNQSLNWVKQAILDGRRDFDVLESEAKKQIETAGFRPDYLSISNSKTLEPAANDDTDITVLGAMYTEAARLIDNVSLSVVN.

Residue 30–37 coordinates ATP; it reads MGNLHNAH. Catalysis depends on histidine 37, which acts as the Proton donor. Glutamine 61 provides a ligand contact to (R)-pantoate. Residue glutamine 61 participates in beta-alanine binding. 149 to 152 contacts ATP; sequence GIKD. Glutamine 155 contacts (R)-pantoate. ATP contacts are provided by residues valine 178 and 186–189; that span reads MSSR.

Belongs to the pantothenate synthetase family. As to quaternary structure, homodimer.

Its subcellular location is the cytoplasm. The catalysed reaction is (R)-pantoate + beta-alanine + ATP = (R)-pantothenate + AMP + diphosphate + H(+). It participates in cofactor biosynthesis; (R)-pantothenate biosynthesis; (R)-pantothenate from (R)-pantoate and beta-alanine: step 1/1. Catalyzes the condensation of pantoate with beta-alanine in an ATP-dependent reaction via a pantoyl-adenylate intermediate. This is Pantothenate synthetase from Saccharophagus degradans (strain 2-40 / ATCC 43961 / DSM 17024).